The primary structure comprises 368 residues: Carbamoyl phosphate synthase small chain (368 aa).

A CPSase region spans residues 1–178 (MKAVLGLEDG…GAAGAWKGSG (178 aa)). 3 residues coordinate L-glutamine: S45, G230, and G232. A Glutamine amidotransferase type-1 domain is found at 182–368 (HAVVVDLGIK…KVVKVLGGGL (187 aa)). C257 functions as the Nucleophile in the catalytic mechanism. L-glutamine is bound by residues F258, Q261, N299, G301, and Y302. Residues H342 and E344 contribute to the active site.

Belongs to the CarA family. Composed of two chains; the small (or glutamine) chain promotes the hydrolysis of glutamine to ammonia, which is used by the large (or ammonia) chain to synthesize carbamoyl phosphate. Tetramer of heterodimers (alpha,beta)4.

It catalyses the reaction hydrogencarbonate + L-glutamine + 2 ATP + H2O = carbamoyl phosphate + L-glutamate + 2 ADP + phosphate + 2 H(+). It carries out the reaction L-glutamine + H2O = L-glutamate + NH4(+). It functions in the pathway amino-acid biosynthesis; L-arginine biosynthesis; carbamoyl phosphate from bicarbonate: step 1/1. It participates in pyrimidine metabolism; UMP biosynthesis via de novo pathway; (S)-dihydroorotate from bicarbonate: step 1/3. Its function is as follows. Small subunit of the glutamine-dependent carbamoyl phosphate synthetase (CPSase). CPSase catalyzes the formation of carbamoyl phosphate from the ammonia moiety of glutamine, carbonate, and phosphate donated by ATP, constituting the first step of 2 biosynthetic pathways, one leading to arginine and/or urea and the other to pyrimidine nucleotides. The small subunit (glutamine amidotransferase) binds and cleaves glutamine to supply the large subunit with the substrate ammonia. The protein is Carbamoyl phosphate synthase small chain of Methanosarcina mazei (strain ATCC BAA-159 / DSM 3647 / Goe1 / Go1 / JCM 11833 / OCM 88) (Methanosarcina frisia).